The following is a 223-amino-acid chain: Oxaloacetate tautomerase FAHD1, mitochondrial (223 aa).

Residues 1 to 30 (MATSMIQRMFKQGTKIVCVGRNYAAHAKEL) constitute a mitochondrion transit peptide. Glu67, Glu69, and Asp98 together coordinate Mg(2+).

Belongs to the FAH family. The cofactor is Mg(2+). Requires Mn(2+) as cofactor.

It localises to the mitochondrion. It carries out the reaction oxaloacetate = enol-oxaloacetate. Its function is as follows. Tautomerase that converts enol-oxaloacetate, a strong inhibitor of succinate dehydrogenase, to the physiological keto form of oxaloacetate. This chain is Oxaloacetate tautomerase FAHD1, mitochondrial, found in Arabidopsis thaliana (Mouse-ear cress).